A 190-amino-acid polypeptide reads, in one-letter code: Protein hunchback (190 aa).

3 disordered regions span residues 13 to 59, 86 to 110, and 142 to 190; these read EPMS…SSNL, AAMTPSPSNNDQNSPLTPPGLPNPM, and QTND…KYMA. Basic residues predominate over residues 17 to 31; the sequence is HHHHHSHHHGHHHML. The segment covering 90 to 100 has biased composition (polar residues); it reads PSPSNNDQNSP. Positions 171–190 are enriched in basic and acidic residues; it reads EPEKDHDLISNSSEDMKYMA.

Belongs to the hunchback C2H2-type zinc-finger protein family.

Its subcellular location is the nucleus. Functionally, gap class segmentation protein that controls development of head structures. This Scaptomyza crassifemur (Fruit fly) protein is Protein hunchback (hb).